Consider the following 208-residue polypeptide: Imidazole glycerol phosphate synthase subunit HisH (208 aa).

The region spanning 1 to 206 is the Glutamine amidotransferase type-1 domain; the sequence is MIVIIDYDTG…KEVIRSCKSS (206 aa). Cys79 functions as the Nucleophile in the catalytic mechanism. Catalysis depends on residues His181 and Glu183.

Heterodimer of HisH and HisF.

Its subcellular location is the cytoplasm. It carries out the reaction 5-[(5-phospho-1-deoxy-D-ribulos-1-ylimino)methylamino]-1-(5-phospho-beta-D-ribosyl)imidazole-4-carboxamide + L-glutamine = D-erythro-1-(imidazol-4-yl)glycerol 3-phosphate + 5-amino-1-(5-phospho-beta-D-ribosyl)imidazole-4-carboxamide + L-glutamate + H(+). The enzyme catalyses L-glutamine + H2O = L-glutamate + NH4(+). It participates in amino-acid biosynthesis; L-histidine biosynthesis; L-histidine from 5-phospho-alpha-D-ribose 1-diphosphate: step 5/9. IGPS catalyzes the conversion of PRFAR and glutamine to IGP, AICAR and glutamate. The HisH subunit catalyzes the hydrolysis of glutamine to glutamate and ammonia as part of the synthesis of IGP and AICAR. The resulting ammonia molecule is channeled to the active site of HisF. The sequence is that of Imidazole glycerol phosphate synthase subunit HisH from Listeria monocytogenes serotype 4b (strain CLIP80459).